The chain runs to 363 residues: Probable L-tyrosine/L-aspartate decarboxylase (363 aa).

N6-(pyridoxal phosphate)lysine is present on lysine 224.

This sequence belongs to the group II decarboxylase family. MfnA subfamily. Pyridoxal 5'-phosphate serves as cofactor.

It carries out the reaction L-tyrosine + H(+) = tyramine + CO2. The catalysed reaction is L-aspartate + H(+) = beta-alanine + CO2. It participates in cofactor biosynthesis; methanofuran biosynthesis. Its pathway is cofactor biosynthesis; coenzyme A biosynthesis. Functionally, catalyzes the decarboxylation of L-tyrosine to produce tyramine for methanofuran biosynthesis. Can also catalyze the decarboxylation of L-aspartate to produce beta-alanine for coenzyme A (CoA) biosynthesis. In Methanosphaerula palustris (strain ATCC BAA-1556 / DSM 19958 / E1-9c), this protein is Probable L-tyrosine/L-aspartate decarboxylase.